The following is a 498-amino-acid chain: ATP synthase subunit beta, chloroplastic (498 aa).

Threonine 6 carries the post-translational modification Phosphothreonine. Position 13 is a phosphoserine (serine 13). An ATP-binding site is contributed by 172–179 (GGAGVGKT).

This sequence belongs to the ATPase alpha/beta chains family. As to quaternary structure, F-type ATPases have 2 components, CF(1) - the catalytic core - and CF(0) - the membrane proton channel. CF(1) has five subunits: alpha(3), beta(3), gamma(1), delta(1), epsilon(1). CF(0) has four main subunits: a(1), b(1), b'(1) and c(9-12).

Its subcellular location is the plastid. The protein localises to the chloroplast thylakoid membrane. The catalysed reaction is ATP + H2O + 4 H(+)(in) = ADP + phosphate + 5 H(+)(out). Produces ATP from ADP in the presence of a proton gradient across the membrane. The catalytic sites are hosted primarily by the beta subunits. The polypeptide is ATP synthase subunit beta, chloroplastic (Capsella bursa-pastoris (Shepherd's purse)).